A 144-amino-acid polypeptide reads, in one-letter code: Galectin a (144 aa).

One can recognise a Galectin domain in the interval 1–138; it reads DHIDLEFDVG…DAVLRKLCVV (138 aa).

Tetramer.

Lectin that binds beta-galactoside and a wide array of complex carbohydrates. The sequence is that of Galectin a from Aplysina lactuca (Marine sponge).